Consider the following 247-residue polypeptide: Eukaryotic translation initiation factor 6 (247 aa).

Phosphoserine; by CK1 is present on residues Ser174 and Ser175.

This sequence belongs to the eIF-6 family. In terms of assembly, monomer. Associates with the 60S ribosomal subunit. In terms of processing, phosphorylation at Ser-174 and Ser-175 promotes nuclear export.

It is found in the cytoplasm. Its subcellular location is the nucleus. The protein localises to the nucleolus. In terms of biological role, binds to the 60S ribosomal subunit and prevents its association with the 40S ribosomal subunit to form the 80S initiation complex in the cytoplasm. Is also involved in ribosome biogenesis. Associates with pre-60S subunits in the nucleus and is involved in its nuclear export. This is Eukaryotic translation initiation factor 6 (tif6) from Aspergillus oryzae (strain ATCC 42149 / RIB 40) (Yellow koji mold).